The sequence spans 262 residues: Putative carbamate hydrolase RutD (262 aa).

This sequence belongs to the AB hydrolase superfamily. Hydrolase RutD family.

The enzyme catalyses carbamate + 2 H(+) = NH4(+) + CO2. Involved in pyrimidine catabolism. May facilitate the hydrolysis of carbamate, a reaction that can also occur spontaneously. The polypeptide is Putative carbamate hydrolase RutD (Rhizobium rhizogenes (strain K84 / ATCC BAA-868) (Agrobacterium radiobacter)).